Here is a 245-residue protein sequence, read N- to C-terminus: Dehydrogenase/reductase SDR family member 6 (245 aa).

NAD(+)-binding positions include 16–18 (QGI), aspartate 37, and aspartate 58. Arginine 144 serves as a coordination point for substrate. The active-site Proton acceptor is the tyrosine 147. Residues lysine 151 and 180–184 (VDTPS) each bind NAD(+). Positions 188 and 205 each coordinate substrate.

This sequence belongs to the short-chain dehydrogenases/reductases (SDR) family. Homotetramer.

The protein localises to the cytoplasm. It carries out the reaction cis-4-hydroxy-L-proline + NAD(+) = 4-oxo-L-proline + NADH + H(+). The catalysed reaction is (R)-3-hydroxybutanoate + NAD(+) = acetoacetate + NADH + H(+). It participates in amino-acid metabolism. It functions in the pathway siderophore biosynthesis. NAD(H)-dependent dehydrogenase/reductase with a preference for cyclic substrates. Catalyzes stereoselective conversion of 4-oxo-L-proline to cis-4-hydroxy-L-proline, likely a detoxification mechanism for ketoprolines. Mediates the formation of 2,5-dihydroxybenzoate (2,5-DHBA), a siderophore that chelates free cytoplasmic iron and associates with LCN2, thereby regulating iron transport and homeostasis while protecting cells against free radical-induced oxidative stress. The iron-siderophore complex is imported into mitochondria, providing an iron source for mitochondrial metabolic processes in particular heme synthesis. May act as a 3-hydroxybutyrate dehydrogenase. The polypeptide is Dehydrogenase/reductase SDR family member 6 (Rattus norvegicus (Rat)).